Reading from the N-terminus, the 238-residue chain is MIINAKGPASFAEKYIVRSIWDNKFPPGSILPAERELSELIGVTRTTLREVLQRLARDGWLKIQHGKPTRVNNFWETSGLNILETIADLNPEGFPVLVDQLLSARTNVSAIYFRGALRYNPDTAVDVLAKIHQLEDTAESYAEFDYLLHHTLAFSSGNPLYVLILNGFKGLYSRVGRYYFTSSDARLLALNFYKELEVLAQAKNYLDVPALMRTYGMNSGKMWLQLRDDMPASIAQYN.

In terms of domain architecture, HTH gntR-type spans Lys6 to Phe74. A DNA-binding region (H-T-H motif) is located at residues Glu34–Gln53.

As to quaternary structure, homodimer.

The protein localises to the cytoplasm. Its function is as follows. Multifunctional regulator of fatty acid metabolism. The chain is Fatty acid metabolism regulator protein from Shewanella baltica (strain OS155 / ATCC BAA-1091).